A 638-amino-acid chain; its full sequence is MLLAQINRDSQGMTEFPGGGMEAQHVTLCLTEAVTVADGDNLENMEGVSLQAVTLADGSTAYIQHNSKDGRLIDGQVIQLEDGSAAYVQHVPIPKSTGDSLRLEDGQAVQLEDGTTAFIHHTSKDSYDQSSLQAVQLEDGTTAYIHHAVQVPQPDTILAIQADGTVAGLHTGDATIDPDTISALEQYAAKVSIDGSEGVTSTGLIGENEQEKKMQIVLQGHATRVTPKSQQSGEKAFRCKYDGCGKLYTTAHHLKVHERSHTGDRPYQCEHSGCGKAFATGYGLKSHFRTHTGEKPYRCSEDNCTKSFKTSGDLQKHIRTHTGERPFKCPIEGCGRSFTTSNIRKVHIRTHTGERPYYCTEPGCGRAFASATNYKNHVRIHTGEKPYVCTVPGCDKRFTEYSSLYKHHVVHTHSKPYNCNHCGKTYKQISTLAMHKRTAHNDTEPIEEEQEAFFEPPPGQGDDVLKGSQITYVTGVEGEDIVSTQVATVTQSGLSQQVTLISQDGTQHVNISQADMQAIGNTITMVTQDGTPITVPTHDAVISSAGTHSVAMVTAEGTEGQQVAIVAQDLAAFHAASSEMGHQPHSHHLVTTETRPLTLVATSNGTQIAVQLGEQPSLEEAIRIASRIQQGETPGLDD.

Methionine 1 carries the post-translational modification N-acetylmethionine. A Glycyl lysine isopeptide (Lys-Gly) (interchain with G-Cter in SUMO2) cross-link involves residue lysine 213. C2H2-type zinc fingers lie at residues 237 to 261 (FRCKYDGCGKLYTTAHHLKVHERSH), 267 to 291 (YQCEHSGCGKAFATGYGLKSHFRTH), 297 to 321 (YRCSEDNCTKSFKTSGDLQKHIRTH), and 327 to 351 (FKCPIEGCGRSFTTSNIRKVHIRTH). Position 352 is a phosphothreonine (threonine 352). C2H2-type zinc fingers lie at residues 357–381 (YYCTEPGCGRAFASATNYKNHVRIH), 387–411 (YVCTVPGCDKRFTEYSSLYKHHVVH), and 417–440 (YNCNHCGKTYKQISTLAMHKRTAH). Lysine 406 is covalently cross-linked (Glycyl lysine isopeptide (Lys-Gly) (interchain with G-Cter in SUMO2)).

It belongs to the GLI C2H2-type zinc-finger protein family. Interacts with CHD8. Forms a complex with HCFC1 and ZNF143.

The protein localises to the nucleus. Transcriptional activator. In complex with HCFC1 and ZNF143, regulates the expression of several genes, including AP2S1, ESCO2, OPHN1, RBL1, UBXN8 and ZNF32. Activates the gene for selenocysteine tRNA (tRNAsec). Binds to the SPH motif of small nuclear RNA (snRNA) gene promoters. Participates in efficient U6 RNA polymerase III transcription via its interaction with CHD8. This Rattus norvegicus (Rat) protein is Zinc finger protein 143 (Znf143).